A 620-amino-acid polypeptide reads, in one-letter code: Glutathione-regulated potassium-efflux system protein KefC (620 aa).

12 helical membrane passes run 4–24, 26–46, 54–74, 90–110, 114–134, 149–169, 178–198, 218–238, 270–290, 294–314, 327–347, and 359–379; these read HTLL…PIAV, LGLG…PWGL, SILH…GLEL, GALQ…FLGL, VAEL…MQAM, FAVL…IPLL, LGAF…VVVL, VFSA…EEVG, GLLL…GTLV, LRIL…LWLV, WFAV…GAAQ, and ALTL…VLLT. Positions 399 to 518 constitute an RCK N-terminal domain; it reads QPRVIVAGFG…AGVAMPERET (120 aa). The segment at 599–620 is disordered; the sequence is QGTAEGKHSGEVADEPEVKPSI.

It belongs to the monovalent cation:proton antiporter 2 (CPA2) transporter (TC 2.A.37) family. KefC subfamily. In terms of assembly, homodimer. Interacts with the regulatory subunit KefF.

The protein resides in the cell inner membrane. Pore-forming subunit of a potassium efflux system that confers protection against electrophiles. Catalyzes K(+)/H(+) antiport. This is Glutathione-regulated potassium-efflux system protein KefC from Salmonella paratyphi B (strain ATCC BAA-1250 / SPB7).